The chain runs to 245 residues: Ribonuclease PH (245 aa).

Residues R86 and 124-126 contribute to the phosphate site; that span reads GTR.

This sequence belongs to the RNase PH family. As to quaternary structure, homohexameric ring arranged as a trimer of dimers.

The catalysed reaction is tRNA(n+1) + phosphate = tRNA(n) + a ribonucleoside 5'-diphosphate. Functionally, phosphorolytic 3'-5' exoribonuclease that plays an important role in tRNA 3'-end maturation. Removes nucleotide residues following the 3'-CCA terminus of tRNAs; can also add nucleotides to the ends of RNA molecules by using nucleoside diphosphates as substrates, but this may not be physiologically important. Probably plays a role in initiation of 16S rRNA degradation (leading to ribosome degradation) during starvation. The protein is Ribonuclease PH of Bacillus velezensis (strain DSM 23117 / BGSC 10A6 / LMG 26770 / FZB42) (Bacillus amyloliquefaciens subsp. plantarum).